The chain runs to 610 residues: Butyryl-CoA dehydrogenase Swol_1933 (610 aa).

Residue Glu-451 is the Proton acceptor of the active site.

The protein belongs to the acyl-CoA dehydrogenase family. Requires FAD as cofactor.

Its subcellular location is the cytoplasm. It carries out the reaction butanoyl-CoA + oxidized [electron-transfer flavoprotein] + H(+) = (2E)-butenoyl-CoA + reduced [electron-transfer flavoprotein]. The enzyme catalyses a short-chain 2,3-saturated fatty acyl-CoA + oxidized [electron-transfer flavoprotein] + H(+) = a short-chain (2E)-enoyl-CoA + reduced [electron-transfer flavoprotein]. It functions in the pathway lipid metabolism; butanoate metabolism. Its function is as follows. Involved in syntrophic growth of S.wolfei with butyrate, as part of the butyrate oxidation pathway. Catalyzes the oxidation of butanoyl-CoA to crotonyl-CoA. Probably passes the electrons released by this reaction on to electron-transfer flavoproteins (EtfAB) to finally generate hydrogen and/or formate. In Syntrophomonas wolfei subsp. wolfei (strain DSM 2245B / Goettingen), this protein is Butyryl-CoA dehydrogenase Swol_1933.